We begin with the raw amino-acid sequence, 620 residues long: Protein regulator of cytokinesis 1 (620 aa).

The required for the interaction with KIF4A stretch occupies residues 1-303; that stretch reads MRRSEVLAEE…IEAIRVELVQ (303 aa). Positions 1–341 are dimerization; it reads MRRSEVLAEE…QLHDAEIVRL (341 aa). Coiled coils occupy residues 96-133, 211-304, and 383-463; these read ILQL…ELCE, SLEN…LVQY, and GNLL…TEML. A spectrin-fold region spans residues 342–466; that stretch reads KNYYEVHKEL…QTETEMLYGS (125 aa). Residues 446–459 are compositionally biased toward basic and acidic residues; the sequence is AKQERQLKNKKQTE. The interval 446 to 488 is disordered; that stretch reads AKQERQLKNKKQTETEMLYGSAPRTPSKRRGLAPNTPGKARKL. Positions 467–620 are unstructured, Arg/Lys rich; it reads APRTPSKRRG…GILNSTNIQS (154 aa). Thr-470 and Thr-481 each carry phosphothreonine; by CDK1. A phosphoserine mark is found at Ser-513, Arg-541, and Ser-571. Positions 517-545 are disordered; it reads RLPPSGSKPVAASTCSGKKTPRTGRHGAN. Position 578 is a phosphothreonine (Thr-578). The interval 600–620 is disordered; sequence LSKASKSDATSGILNSTNIQS. The segment covering 606–620 has biased composition (polar residues); sequence SDATSGILNSTNIQS. Thr-616 carries the post-translational modification Phosphothreonine; by PLK1.

Belongs to the MAP65/ASE1 family. As to quaternary structure, homodimer. Interacts with the C-terminal Rho-GAP domain and the basic region of RACGAP1. The interaction with RACGAP1 inhibits its GAP activity towards CDC42 in vitro, which may be required for maintaining normal spindle morphology. Interacts (via N-terminus) with the C-terminus of CENPE (via C-terminus); the interaction occurs during late mitosis. Interacts (via N-terminus) with KIF4A (via C-terminus); the interaction is required for the progression of mitosis. Interacts (via N-terminus) with KIF23 (via C-terminus); the interaction occurs during late mitosis. Interacts with KIF14 and KIF20A. Interacts with PLK1. Interacts with KIF20B. Interacts with CCDC66. Phosphorylation by CDK1 in early mitosis holds PRC1 in an inactive monomeric state, during the metaphase to anaphase transition, PRC1 is dephosphorylated, promoting interaction with KIF4A, which then translocates PRC1 along mitotic spindles to the plus ends of antiparallel interdigitating microtubules. Dephosphorylation also promotes MT-bundling activity by allowing dimerization. Phosphorylation by CDK1 prevents PLK1-binding: upon degradation of CDK1 at anaphase and dephosphorylation, it is then phosphorylated by PLK1, leading to cytokinesis. In terms of tissue distribution, overexpressed in bladder cancer cells.

The protein resides in the nucleus. It localises to the cytoplasm. The protein localises to the cytoskeleton. It is found in the spindle pole. Its subcellular location is the midbody. The protein resides in the chromosome. Its function is as follows. Key regulator of cytokinesis that cross-links antiparrallel microtubules at an average distance of 35 nM. Essential for controlling the spatiotemporal formation of the midzone and successful cytokinesis. Required for KIF14 localization to the central spindle and midbody. Required to recruit PLK1 to the spindle. Stimulates PLK1 phosphorylation of RACGAP1 to allow recruitment of ECT2 to the central spindle. Acts as an oncogene for promoting bladder cancer cells proliferation, apoptosis inhibition and carcinogenic progression. The chain is Protein regulator of cytokinesis 1 from Homo sapiens (Human).